The primary structure comprises 186 residues: Elongation factor P (186 aa).

It belongs to the elongation factor P family.

Its subcellular location is the cytoplasm. It participates in protein biosynthesis; polypeptide chain elongation. Involved in peptide bond synthesis. Stimulates efficient translation and peptide-bond synthesis on native or reconstituted 70S ribosomes in vitro. Probably functions indirectly by altering the affinity of the ribosome for aminoacyl-tRNA, thus increasing their reactivity as acceptors for peptidyl transferase. This Prochlorococcus marinus (strain MIT 9215) protein is Elongation factor P.